A 459-amino-acid polypeptide reads, in one-letter code: tRNA(Ile)-lysidine synthase (459 aa).

Position 38–43 (38–43) interacts with ATP; the sequence is SGGMDS.

Belongs to the tRNA(Ile)-lysidine synthase family.

Its subcellular location is the cytoplasm. The enzyme catalyses cytidine(34) in tRNA(Ile2) + L-lysine + ATP = lysidine(34) in tRNA(Ile2) + AMP + diphosphate + H(+). Ligates lysine onto the cytidine present at position 34 of the AUA codon-specific tRNA(Ile) that contains the anticodon CAU, in an ATP-dependent manner. Cytidine is converted to lysidine, thus changing the amino acid specificity of the tRNA from methionine to isoleucine. This is tRNA(Ile)-lysidine synthase from Acinetobacter baylyi (strain ATCC 33305 / BD413 / ADP1).